The primary structure comprises 447 residues: ATP-dependent protease ATPase subunit HslU (447 aa).

Residues Ile18, 60–65, Asp259, Glu325, and Arg397 contribute to the ATP site; that span reads GVGKTE.

It belongs to the ClpX chaperone family. HslU subfamily. A double ring-shaped homohexamer of HslV is capped on each side by a ring-shaped HslU homohexamer. The assembly of the HslU/HslV complex is dependent on binding of ATP.

The protein localises to the cytoplasm. Its function is as follows. ATPase subunit of a proteasome-like degradation complex; this subunit has chaperone activity. The binding of ATP and its subsequent hydrolysis by HslU are essential for unfolding of protein substrates subsequently hydrolyzed by HslV. HslU recognizes the N-terminal part of its protein substrates and unfolds these before they are guided to HslV for hydrolysis. The polypeptide is ATP-dependent protease ATPase subunit HslU (Burkholderia pseudomallei (strain 668)).